The chain runs to 465 residues: MSSPTITVVGAGLAGSEAALAAAKLGVRVRLFEMRPQKMTPAHRTANFAELVCSTSLGGEGEMQSKGLLQAEMRSVGAAIVTSADASRVPAGNALAVDRDAFSAHVTEQVKNHPLIEVVEGEVETVPDGICVIASGPLTADALASDLRRLTGSERLSFYDAAAPVIDVDSIDMDIAWRAGRYDQSADYINCPFTKEEYLAFFEALETARSHTPHDWEKLEFFEGCMPIEEIARRGVDTPRFGPMSPKGLDDPKTGRWPYAVAQLRQEDAEGRMWSLVGFQTGLKWGDQKAVVQLIPGLHNADIVRYGVMHRNTYLNAPEVLDSTLQLRADPQKLVAGVLAGTEGYLESSATGWLAGTNAARLALGLEPLTPPAESMLGGLVRYLASANPKGFQPMNVNWALVPELPTEINEKTGKPKKLGKREKRPPLFRRGLGAFMAWAGQDAGVPVTPPAVPEHPQDELPAIR.

10–15 contacts FAD; it reads GAGLAG.

The protein belongs to the MnmG family. TrmFO subfamily. Requires FAD as cofactor.

Its subcellular location is the cytoplasm. It carries out the reaction uridine(54) in tRNA + (6R)-5,10-methylene-5,6,7,8-tetrahydrofolate + NADH + H(+) = 5-methyluridine(54) in tRNA + (6S)-5,6,7,8-tetrahydrofolate + NAD(+). It catalyses the reaction uridine(54) in tRNA + (6R)-5,10-methylene-5,6,7,8-tetrahydrofolate + NADPH + H(+) = 5-methyluridine(54) in tRNA + (6S)-5,6,7,8-tetrahydrofolate + NADP(+). In terms of biological role, catalyzes the folate-dependent formation of 5-methyl-uridine at position 54 (M-5-U54) in all tRNAs. In Deinococcus radiodurans (strain ATCC 13939 / DSM 20539 / JCM 16871 / CCUG 27074 / LMG 4051 / NBRC 15346 / NCIMB 9279 / VKM B-1422 / R1), this protein is Methylenetetrahydrofolate--tRNA-(uracil-5-)-methyltransferase TrmFO.